The following is a 323-amino-acid chain: tRNA U34 carboxymethyltransferase (323 aa).

Residues K91, W105, K110, G130, 152–154, 181–182, M196, Y200, and R315 each bind carboxy-S-adenosyl-L-methionine; these read DPS and IE.

This sequence belongs to the class I-like SAM-binding methyltransferase superfamily. CmoB family. As to quaternary structure, homotetramer.

It carries out the reaction carboxy-S-adenosyl-L-methionine + 5-hydroxyuridine(34) in tRNA = 5-carboxymethoxyuridine(34) in tRNA + S-adenosyl-L-homocysteine + H(+). Functionally, catalyzes carboxymethyl transfer from carboxy-S-adenosyl-L-methionine (Cx-SAM) to 5-hydroxyuridine (ho5U) to form 5-carboxymethoxyuridine (cmo5U) at position 34 in tRNAs. This Vibrio cholerae serotype O1 (strain ATCC 39541 / Classical Ogawa 395 / O395) protein is tRNA U34 carboxymethyltransferase.